The following is a 111-amino-acid chain: uncharacterized protein (111 aa).

The next 2 membrane-spanning stretches (helical) occupy residues 18–38 (LNVFLFFLGFLLPLFLGLFVS) and 42–62 (LALALSSGWFIMDLILFRTFP).

Its subcellular location is the membrane. This is an uncharacterized protein from Saccharomyces cerevisiae (strain ATCC 204508 / S288c) (Baker's yeast).